Reading from the N-terminus, the 314-residue chain is Vacuolar membrane protein SCY_4732 (314 aa).

Residues 32–61 (KPTSSVVSETSSKSLPSLTSSAFSTSSGTT) are disordered. A helical transmembrane segment spans residues 93–113 (VYIAVGAVIGAIFISILIWWL). A phosphoserine mark is found at Ser-148, Ser-254, and Ser-274. A disordered region spans residues 240–309 (EERKLNLNRP…PSMFLDDVLN (70 aa)). The span at 254-269 (SPERKEKKINSMEGYH) shows a compositional bias: basic and acidic residues.

The protein belongs to the PRM5 family.

It localises to the vacuole membrane. This Saccharomyces cerevisiae (strain YJM789) (Baker's yeast) protein is Vacuolar membrane protein SCY_4732.